A 194-amino-acid polypeptide reads, in one-letter code: Protein GrpE (194 aa).

Belongs to the GrpE family. Homodimer.

Its subcellular location is the cytoplasm. In terms of biological role, participates actively in the response to hyperosmotic and heat shock by preventing the aggregation of stress-denatured proteins, in association with DnaK and GrpE. It is the nucleotide exchange factor for DnaK and may function as a thermosensor. Unfolded proteins bind initially to DnaJ; upon interaction with the DnaJ-bound protein, DnaK hydrolyzes its bound ATP, resulting in the formation of a stable complex. GrpE releases ADP from DnaK; ATP binding to DnaK triggers the release of the substrate protein, thus completing the reaction cycle. Several rounds of ATP-dependent interactions between DnaJ, DnaK and GrpE are required for fully efficient folding. The polypeptide is Protein GrpE (Aliivibrio fischeri (strain MJ11) (Vibrio fischeri)).